A 630-amino-acid polypeptide reads, in one-letter code: Probable potassium transport system protein Kup 1 (630 aa).

12 helical membrane passes run 15–35 (FAAL…TSPL), 59–79 (LSLI…TFIM), 109–129 (WIMI…MVTP), 145–165 (PALK…LFFV), 173–193 (VGAF…LLGV), 223–243 (LVAM…YADM), 255–275 (WFAF…ALIL), 297–317 (LVGL…SGAF), 345–365 (IYLP…VLGF), 374–394 (AYGI…TVVV), 405–425 (AGLL…ANIL), and 427–447 (IPDG…LMTT).

Belongs to the HAK/KUP transporter (TC 2.A.72) family.

It localises to the cell inner membrane. It catalyses the reaction K(+)(in) + H(+)(in) = K(+)(out) + H(+)(out). Functionally, transport of potassium into the cell. Likely operates as a K(+):H(+) symporter. This Dechloromonas aromatica (strain RCB) protein is Probable potassium transport system protein Kup 1.